The following is a 112-amino-acid chain: MRLSLCLLTILVVCCYEANGQTLAGQVCQALQDVTITFLLNPEEELKRELEEFDAPPEAVEANLKVKRCINKIMYGDRLSMGTSLVFIMLKCDVKVWLQINFPRGRWFSEIN.

The first 20 residues, Met-1–Gly-20, serve as a signal peptide directing secretion. Gln-21 carries the pyrrolidone carboxylic acid modification.

This sequence belongs to the secretoglobin family. Lipophilin subfamily. Prostatein is composed of three different peptides called C1, C2 and C3. These form covalent C1:C3 (F) and C2:C3 (S) heterodimers whose noncovalent association forms tetrameric (C1:C3/C3:C2) prostatein molecules. In terms of processing, linked by three disulfide bonds to C3. The N-terminus is blocked.

It is found in the secreted. Functionally, part of prostatein which is the major secretory glycoprotein of ventral prostate gland. In Rattus norvegicus (Rat), this protein is Prostatic steroid-binding protein C2 (Psbpc2).